We begin with the raw amino-acid sequence, 142 residues long: Large ribosomal subunit protein uL11 (142 aa).

This sequence belongs to the universal ribosomal protein uL11 family. In terms of assembly, part of the ribosomal stalk of the 50S ribosomal subunit. Interacts with L10 and the large rRNA to form the base of the stalk. L10 forms an elongated spine to which L12 dimers bind in a sequential fashion forming a multimeric L10(L12)X complex. One or more lysine residues are methylated.

Its function is as follows. Forms part of the ribosomal stalk which helps the ribosome interact with GTP-bound translation factors. This chain is Large ribosomal subunit protein uL11, found in Rhodopseudomonas palustris (strain HaA2).